Here is a 192-residue protein sequence, read N- to C-terminus: Thymidine kinase (192 aa).

ATP contacts are provided by residues 9-16 (SAMNAGKS) and 87-90 (DECQ). The active-site Proton acceptor is the Glu-88. Cys-145, Cys-147, Cys-182, and His-185 together coordinate Zn(2+).

Belongs to the thymidine kinase family. As to quaternary structure, homotetramer.

It localises to the cytoplasm. The catalysed reaction is thymidine + ATP = dTMP + ADP + H(+). The protein is Thymidine kinase of Photobacterium profundum (strain SS9).